Consider the following 284-residue polypeptide: Para-Rep C3 (284 aa).

A CRESS-DNA virus Rep endonuclease domain is found at 3–98; sequence TVQSTCWVFT…IEGPWEYGKY (96 aa). An RCR-1 motif is present at residues 10–13; that stretch reads VFTL. A divalent metal cation is bound by residues glutamate 36 and histidine 42. The RCR-2 signature appears at 42-44; the sequence is HLQ. A Nuclear localization signal motif is present at residues 51–71; that stretch reads AQQSLGQMKAIIPGAHFEKMR. Catalysis depends on tyrosine 81, which acts as the For DNA cleavage activity. The RCR-3 signature appears at 81–84; sequence YAMK. Residue aspartate 86 coordinates a divalent metal cation. A Nuclear localization signal motif is present at residues 98 to 104; that stretch reads YIKKGSH. Position 174–182 (174–182) interacts with ATP; that stretch reads GPKGGEGKS.

Belongs to the nanoviridea/circoviridae replication-associated protein family. As to quaternary structure, homooligomer (Potential). Rep binds to repeated DNA motifs (iterons). Requires Mg(2+) as cofactor. Mn(2+) is required as a cofactor.

The protein resides in the host nucleus. The enzyme catalyses ATP + H2O = ADP + phosphate + H(+). In terms of biological role, initiates and terminates the replication only of its own subviral DNA molecule. The closed circular ssDNA genome is first converted to a superhelical dsDNA. Rep binds a specific hairpin at the genome origin of replication. Introduces an endonucleolytic nick within the intergenic region of the genome, thereby initiating the rolling circle replication (RCR). Following cleavage, binds covalently to the 5'-phosphate of DNA as a tyrosyl ester. The cleavage gives rise to a free 3'-OH that serves as a primer for the cellular DNA polymerase. The polymerase synthesizes the (+) strand DNA by rolling circle mechanism. After one round of replication, a Rep-catalyzed nucleotidyl transfer reaction releases a circular single-stranded virus genome, thereby terminating the replication. Displays origin-specific DNA cleavage, nucleotidyl transferase, ATPase and helicase activities. The chain is Para-Rep C3 (C3) from Milk vetch dwarf C3 alphasatellite (MVDC3A).